The sequence spans 379 residues: Histidinol-phosphate aminotransferase (379 aa).

The residue at position 231 (Lys-231) is an N6-(pyridoxal phosphate)lysine.

The protein belongs to the class-II pyridoxal-phosphate-dependent aminotransferase family. Histidinol-phosphate aminotransferase subfamily. As to quaternary structure, homodimer. The cofactor is pyridoxal 5'-phosphate.

The catalysed reaction is L-histidinol phosphate + 2-oxoglutarate = 3-(imidazol-4-yl)-2-oxopropyl phosphate + L-glutamate. It participates in amino-acid biosynthesis; L-histidine biosynthesis; L-histidine from 5-phospho-alpha-D-ribose 1-diphosphate: step 7/9. The protein is Histidinol-phosphate aminotransferase of Mycolicibacterium smegmatis (strain ATCC 700084 / mc(2)155) (Mycobacterium smegmatis).